Consider the following 173-residue polypeptide: Adenine phosphoribosyltransferase (173 aa).

Belongs to the purine/pyrimidine phosphoribosyltransferase family. Homodimer.

The protein resides in the cytoplasm. It catalyses the reaction AMP + diphosphate = 5-phospho-alpha-D-ribose 1-diphosphate + adenine. Its pathway is purine metabolism; AMP biosynthesis via salvage pathway; AMP from adenine: step 1/1. In terms of biological role, catalyzes a salvage reaction resulting in the formation of AMP, that is energically less costly than de novo synthesis. This is Adenine phosphoribosyltransferase from Desulfosudis oleivorans (strain DSM 6200 / JCM 39069 / Hxd3) (Desulfococcus oleovorans).